A 369-amino-acid polypeptide reads, in one-letter code: Phospho-N-acetylmuramoyl-pentapeptide-transferase (369 aa).

Helical transmembrane passes span Ala3–Ile23, Gly53–Trp73, Val81–Leu101, Trp118–Leu138, Phe162–Val182, Leu198–Phe218, Pro240–Trp260, Ile267–Leu287, Thr290–Leu310, and Phe347–Ile367.

It belongs to the glycosyltransferase 4 family. MraY subfamily. It depends on Mg(2+) as a cofactor.

The protein resides in the cell membrane. The enzyme catalyses UDP-N-acetyl-alpha-D-muramoyl-L-alanyl-gamma-D-glutamyl-meso-2,6-diaminopimeloyl-D-alanyl-D-alanine + di-trans,octa-cis-undecaprenyl phosphate = di-trans,octa-cis-undecaprenyl diphospho-N-acetyl-alpha-D-muramoyl-L-alanyl-D-glutamyl-meso-2,6-diaminopimeloyl-D-alanyl-D-alanine + UMP. Its pathway is cell wall biogenesis; peptidoglycan biosynthesis. Its function is as follows. Catalyzes the initial step of the lipid cycle reactions in the biosynthesis of the cell wall peptidoglycan: transfers peptidoglycan precursor phospho-MurNAc-pentapeptide from UDP-MurNAc-pentapeptide onto the lipid carrier undecaprenyl phosphate, yielding undecaprenyl-pyrophosphoryl-MurNAc-pentapeptide, known as lipid I. The polypeptide is Phospho-N-acetylmuramoyl-pentapeptide-transferase (Clavibacter michiganensis subsp. michiganensis (strain NCPPB 382)).